We begin with the raw amino-acid sequence, 335 residues long: MLNTVIVGASGYAGAELAALVQNHPQLKLFGLYVSAGSQDAHKRFSSLHPQWVGALDQPLLPLDEDGMTRILTQADLVLLATAHEVSAELAPKFLAKGLPVFDLSGAFRVKDQQFYSSFYGFTHENEQLLEQAAYGLAEWNSDAIAAAQLIAVPGCYPTASLCALKPLQQAGLIAEGWQPIINAVSGVSGAGRKAAINTSFCEVSLSPYGTFNHRHQPEISHHLGKEVLFQPHLGNYVRGILATIYVQMADGVTPTQVDQAFLKAYEGKPLVRLTGQMPSIRGVASTPYCDIAWQQQGNMLVVVSAIDNLLKGAASQAMQCINIKFGFDPATGLI.

The active site involves C156.

This sequence belongs to the NAGSA dehydrogenase family. Type 1 subfamily.

It localises to the cytoplasm. The catalysed reaction is N-acetyl-L-glutamate 5-semialdehyde + phosphate + NADP(+) = N-acetyl-L-glutamyl 5-phosphate + NADPH + H(+). The protein operates within amino-acid biosynthesis; L-arginine biosynthesis; N(2)-acetyl-L-ornithine from L-glutamate: step 3/4. Catalyzes the NADPH-dependent reduction of N-acetyl-5-glutamyl phosphate to yield N-acetyl-L-glutamate 5-semialdehyde. The sequence is that of N-acetyl-gamma-glutamyl-phosphate reductase from Aeromonas salmonicida (strain A449).